Reading from the N-terminus, the 257-residue chain is GTP cyclohydrolase FolE2 (257 aa).

Belongs to the GTP cyclohydrolase IV family.

It catalyses the reaction GTP + H2O = 7,8-dihydroneopterin 3'-triphosphate + formate + H(+). Its pathway is cofactor biosynthesis; 7,8-dihydroneopterin triphosphate biosynthesis; 7,8-dihydroneopterin triphosphate from GTP: step 1/1. In terms of biological role, converts GTP to 7,8-dihydroneopterin triphosphate. The protein is GTP cyclohydrolase FolE2 of Pelobacter propionicus (strain DSM 2379 / NBRC 103807 / OttBd1).